The primary structure comprises 69 residues: MSQNNNETMIADIRKKLNIVNQGLLNPDKFKNANQQDIEEIHNFVMSKDSFSPSEVTAIADELGNLRQD.

This sequence belongs to the UPF0435 family.

The chain is UPF0435 protein SH1076 from Staphylococcus haemolyticus (strain JCSC1435).